Consider the following 406-residue polypeptide: Succinylornithine transaminase (406 aa).

Lys252 carries the post-translational modification N6-(pyridoxal phosphate)lysine.

Belongs to the class-III pyridoxal-phosphate-dependent aminotransferase family. AstC subfamily. It depends on pyridoxal 5'-phosphate as a cofactor.

It catalyses the reaction N(2)-succinyl-L-ornithine + 2-oxoglutarate = N-succinyl-L-glutamate 5-semialdehyde + L-glutamate. The protein operates within amino-acid degradation; L-arginine degradation via AST pathway; L-glutamate and succinate from L-arginine: step 3/5. Its function is as follows. Catalyzes the transamination of N(2)-succinylornithine and alpha-ketoglutarate into N(2)-succinylglutamate semialdehyde and glutamate. Can also act as an acetylornithine aminotransferase. The chain is Succinylornithine transaminase from Escherichia coli O139:H28 (strain E24377A / ETEC).